Here is a 921-residue protein sequence, read N- to C-terminus: Ribosome-releasing factor 2, mitochondrial (921 aa).

Residues 1–55 constitute a mitochondrion transit peptide; sequence MVSALLLRARQNGRAARCLDYPKVKCWALASLPKSSLEKPGFSQVRRFSVFHPQS. A tr-type G domain is found at 60 to 368; it reads DLTRNIGIIA…SVVDLLPSPQ (309 aa). Residues 69–76, 152–156, and 206–209 contribute to the GTP site; these read AHIDAGKT, DTPGH, and NKMD.

Belongs to the TRAFAC class translation factor GTPase superfamily. Classic translation factor GTPase family. EF-G/EF-2 subfamily.

The protein localises to the mitochondrion. In terms of biological role, mitochondrial GTPase that mediates the disassembly of ribosomes from messenger RNA at the termination of mitochondrial protein biosynthesis. Not involved in the GTP-dependent ribosomal translocation step during translation elongation. The protein is Ribosome-releasing factor 2, mitochondrial (mef2) of Emericella nidulans (strain FGSC A4 / ATCC 38163 / CBS 112.46 / NRRL 194 / M139) (Aspergillus nidulans).